Reading from the N-terminus, the 424-residue chain is MLARKSIIPEEYVLARIAAENLRKPRIRDRLPKARFIAKSGACNLAHKNIREQGRFLQDIFTTLVDLKWRHTLVIFTMSFLCSWLLFAIMWWLVAFAHGDIYAYMEKGITEKSGLESAVCVTNVRSFTSAFLFSIEVQVTIGFGGRMMTEECPLAITVLILQNIVGLIINAVMLGCIFMKTAQAHRRAETLIFSRHAVIAVRNGKLCFMFRVGDLRKSMIISASVRIQVVKKTTTPEGEVVPIHQQDIPVDNPIESNNIFLVAPLIICHVIDKRSPLYDISATDLVNQDLEVIVILEGVVETTGITTQARTSYIAEEIQWGHRFVSIVTEEEGVYSVDYSKFGNTVRVAAPRCSARELDEKPSILIQTLQKSELSHQNSLRKRNSMRRNNSMRRSNSIRRNNSSLMVPKVQFMTPEGNQCPSES.

Residues methionine 1–tryptophan 69 lie on the Cytoplasmic side of the membrane. Phosphoserine is present on serine 6. A helical transmembrane segment spans residues arginine 70–valine 94. Topologically, residues alanine 95–serine 126 are extracellular. Positions phenylalanine 127–glutamine 138 form an intramembrane region, helical; Pore-forming. An intramembrane region (pore-forming) is located at residues valine 139–glycine 145. A Selectivity filter motif is present at residues threonine 140 to glycine 145. The Extracellular portion of the chain corresponds to arginine 146–leucine 154. The helical transmembrane segment at alanine 155 to cysteine 176 threads the bilayer. Residues isoleucine 177 to serine 424 are Cytoplasmic-facing. The tract at residues leucine 374–serine 424 is disordered. Positions arginine 387 to serine 404 are enriched in low complexity.

Belongs to the inward rectifier-type potassium channel (TC 1.A.2.1) family. KCNJ8 subfamily. Interacts with ABCC9. In terms of tissue distribution, widely expressed, including in pancreatic islets, pituitary, skeletal muscle and heart.

It is found in the membrane. It carries out the reaction K(+)(in) = K(+)(out). Functionally, inward rectifier potassium channels are characterized by a greater tendency to allow potassium to flow into the cell rather than out of it. Their voltage dependence is regulated by the concentration of extracellular potassium; as external potassium is raised, the voltage range of the channel opening shifts to more positive voltages. The inward rectification is mainly due to the blockage of outward current by internal magnesium. This channel is activated by internal ATP and can be blocked by external barium. Can form a sulfonyllurea-sensitive but ATP-insensitive potassium channel with ABCC9. The sequence is that of ATP-sensitive inward rectifier potassium channel 8 (Kcnj8) from Rattus norvegicus (Rat).